A 167-amino-acid polypeptide reads, in one-letter code: Shikimate kinase (167 aa).

Position 12-17 (12-17 (GSGKTT)) interacts with ATP. T16 is a binding site for Mg(2+). Substrate contacts are provided by D34, R58, and G80. ATP is bound at residue R117. R135 lines the substrate pocket. R152 provides a ligand contact to ATP.

It belongs to the shikimate kinase family. As to quaternary structure, monomer. Mg(2+) serves as cofactor.

The protein resides in the cytoplasm. The catalysed reaction is shikimate + ATP = 3-phosphoshikimate + ADP + H(+). It participates in metabolic intermediate biosynthesis; chorismate biosynthesis; chorismate from D-erythrose 4-phosphate and phosphoenolpyruvate: step 5/7. Functionally, catalyzes the specific phosphorylation of the 3-hydroxyl group of shikimic acid using ATP as a cosubstrate. The polypeptide is Shikimate kinase (Salinispora arenicola (strain CNS-205)).